The chain runs to 361 residues: Glutamate 5-kinase (361 aa).

Lys-7 is an ATP binding site. Residues Ser-47, Asp-134, and Asn-146 each coordinate substrate. Residues 166-167 (TD) and 209-215 (TGGMTTK) contribute to the ATP site. A PUA domain is found at 274–345 (LGTLQLDEGA…EAIETQMSTN (72 aa)).

It belongs to the glutamate 5-kinase family.

Its subcellular location is the cytoplasm. The catalysed reaction is L-glutamate + ATP = L-glutamyl 5-phosphate + ADP. The protein operates within amino-acid biosynthesis; L-proline biosynthesis; L-glutamate 5-semialdehyde from L-glutamate: step 1/2. Its function is as follows. Catalyzes the transfer of a phosphate group to glutamate to form L-glutamate 5-phosphate. The polypeptide is Glutamate 5-kinase (Prochlorococcus marinus (strain MIT 9313)).